We begin with the raw amino-acid sequence, 459 residues long: tRNA(Ile2) 2-agmatinylcytidine synthetase TiaS (459 aa).

A DNA-binding region (OB) is located at residues 282 to 360 (VRVRVWVASI…TINLEKLHII (79 aa)).

It belongs to the TiaS family.

The protein resides in the cytoplasm. The enzyme catalyses cytidine(34) in tRNA(Ile2) + agmatine + ATP + H2O = 2-agmatinylcytidine(34) in tRNA(Ile2) + AMP + 2 phosphate + 2 H(+). Functionally, ATP-dependent agmatine transferase that catalyzes the formation of 2-agmatinylcytidine (agm2C) at the wobble position (C34) of tRNA(Ile2), converting the codon specificity from AUG to AUA. This chain is tRNA(Ile2) 2-agmatinylcytidine synthetase TiaS, found in Staphylothermus marinus (strain ATCC 43588 / DSM 3639 / JCM 9404 / F1).